The sequence spans 168 residues: Diphosphoinositol polyphosphate phosphohydrolase 1 (168 aa).

Met-1 is modified (N-acetylmethionine). Substrate is bound by residues Arg-10, 18–20 (KKR), and 39–41 (SSR). Residues 17 to 142 (YKKRAACLCF…KPVQASYFEA (126 aa)) form the Nudix hydrolase domain. 2 residues coordinate Mg(2+): Gly-50 and Glu-66. A Nudix box motif is present at residues 51–72 (GGMEPEEEPSVAAVREVCEEAG). The Proton acceptor role is filled by Glu-69. Residue Glu-70 participates in Mg(2+) binding. Substrate is bound by residues 89–91 (RKH), Arg-115, and Lys-133.

Belongs to the Nudix hydrolase family. DIPP subfamily. As to quaternary structure, monomer. Mg(2+) is required as a cofactor. Requires Mn(2+) as cofactor. It depends on Zn(2+) as a cofactor.

It localises to the cytoplasm. The protein resides in the nucleus. The catalysed reaction is diphospho-myo-inositol polyphosphate + H2O = myo-inositol polyphosphate + phosphate.. It carries out the reaction 5-diphospho-1D-myo-inositol 1,2,3,4,6-pentakisphosphate + H2O = 1D-myo-inositol hexakisphosphate + phosphate + H(+). It catalyses the reaction 3,5-bis(diphospho)-1D-myo-inositol 1,2,4,6-tetrakisphosphate + H2O = 3-diphospho-1D-myo-inositol 1,2,4,5,6-pentakisphosphate + phosphate + 2 H(+). The enzyme catalyses [phosphate](n+1) + n H2O = (n+1) phosphate + n H(+). The catalysed reaction is P(1),P(5)-bis(5'-adenosyl) pentaphosphate + H2O = ADP + ATP + 2 H(+). It carries out the reaction P(1),P(6)-bis(5'-adenosyl) hexaphosphate + H2O = 2 ATP + 2 H(+). It catalyses the reaction P(1),P(4)-bis(5'-adenosyl) tetraphosphate + H2O = AMP + ATP + 2 H(+). The enzyme catalyses a 5'-end (N(7)-methyl 5'-triphosphoguanosine)-ribonucleoside in mRNA + H2O = N(7)-methyl-GMP + a 5'-end diphospho-ribonucleoside in mRNA + 2 H(+). The catalysed reaction is a 5'-end (N(7)-methyl 5'-triphosphoguanosine)-ribonucleoside in mRNA + H2O = N(7)-methyl-GDP + a 5'-end phospho-ribonucleoside in mRNA + 2 H(+). Diphosphoinositol polyphosphate phosphohydrolase is inhibited by fluoride and InsP6. Its function is as follows. Cleaves a beta-phosphate from the diphosphate groups in PP-InsP5 (diphosphoinositol pentakisphosphate) and [PP]2-InsP4 (bisdiphosphoinositol tetrakisphosphate), suggesting that it may play a role in signal transduction. InsP6 (inositol hexakisphosphate) is not a substrate. Acts as a negative regulator of the ERK1/2 pathway. Also able to catalyze the hydrolysis of dinucleoside oligophosphates, with diadenosine 5',5'''-P1,P6-hexaphosphate (Ap6A) and diadenosine 5',5'''- P1,P5-pentaphosphate (Ap5A) being the preferred substrates. The major reaction products are ADP and p4a from Ap6A and ADP and ATP from Ap5A. Also able to hydrolyze 5- phosphoribose 1-diphosphate. Acts as a decapping enzyme that can hydrolyze both monomethylated and unmethylated capped RNAs. Hydrolyzes monomethylated capped RNA after both the alpha- and beta-phosphates generating m7GMP + ppRNA and m7GDP + pRNA. Modulates the stability of a subset of mRNAs implicated in cell motility. Divalent cations zinc, magnesium and manganese determine its substrate specificity. Exhibits endopolyphosphatase activity in the presence of zinc ions. Exhibits diphosphoinositol polyphosphate phosphohydrolase in the presence of magnesium ions and diadenosine hexaphosphate hydrolase activity in the presence of manganese ions. Plays an important role in limiting DNA damage and maintaining cell survival upon oxidative stress via its endopolyphosphatase activity. This is Diphosphoinositol polyphosphate phosphohydrolase 1 from Rattus norvegicus (Rat).